A 2092-amino-acid polypeptide reads, in one-letter code: Nonribosomal peptide synthetase echPS (2092 aa).

The adenylation 1 stretch occupies residues phenylalanine 13 to arginine 406. Positions serine 524–threonine 600 constitute a Carrier 1 domain. Serine 561 is modified (O-(pantetheine 4'-phosphoryl)serine). The interval serine 596–threonine 626 is disordered. Polar residues predominate over residues aspartate 605–proline 624. The tract at residues proline 624–aspartate 1017 is condensation 1. Residues alanine 1068–arginine 1446 are adenylation 2. The Carrier 2 domain maps to isoleucine 1544–glutamine 1622. Serine 1582 is subject to O-(pantetheine 4'-phosphoryl)serine. Positions serine 1663–isoleucine 2047 are condensation 2.

Belongs to the NRP synthetase family. The cofactor is pantetheine 4'-phosphate.

The catalysed reaction is L-tryptophan + L-alanine + 2 ATP = cyclo(L-tryptophyl-L-alanyl) + 2 ADP + 2 phosphate + 2 H(+). It participates in secondary metabolite biosynthesis. The protein operates within alkaloid biosynthesis. In terms of biological role, nonribosomal peptide synthetase; part of the gene cluster that mediates the biosynthesis of echinulin family alkaloid. The pathway begins with the biosynthesis of the cyclic dipeptide cyclo-L-Trp-L-Ala (cyclo-TA) by the NRPS echPS via condensation of L-alanine and L-tryptophan. The prenyltransferase echPT1 then catalyzes the first prenylation step, a reverse prenylation reaction at C2, to yield preechinulin. Preechinulin is the substrate of the cytochrome P450 monooxygenase echP450 that catalyzes the formation of the double bond between C10 and C11 to produce neoechulin A. The unique prenyltransferase echPT2 functions as a competitive enzyme with echP450 for preechinulin metabolization and uses preechinulin for effective regiospecific prenylations. Preechinulin is prenylated by echPT2 at C5 or C7. C7-prenylation leads to accumulation of tardioxopiperazine B without further modification by echPT2. In contrast, the C5-prenylated tardioxopiperazine A can be prenylated again by echPT2, predominantly at C7 to form echinulin or less frequently at C4 to give variecolorin L. EchPT2 also accepts neoechilunin A to produce varlecolorin G (prenylation at C5) or isoechinulin A (prenylation at C7). EchPT2 further converts isoechinulin A into dehydroechinulin. Moreover, a yet unidentified enzyme can also convert neoechilunin A into neoechilunin B by introducing a double bond between positions C14 and C17 and thus provides a further substrate to echPT2 for C5 and C7 prenylation. The protein is Nonribosomal peptide synthetase echPS of Aspergillus ruber (strain CBS 135680).